The primary structure comprises 635 residues: Probable potassium transport system protein Kup (635 aa).

12 helical membrane-spanning segments follow: residues 22-42 (LVIGAIGVVFGDIGTSPLYTL), 59-79 (VLGILSLVFWALMLVVTLKYV), 111-131 (MYVVGILGIFGASLFFGDGVI), 148-168 (APKLEAFVVPITLVVLGMLFL), 180-200 (AFGPITLVWFFALGAIGVYNM), 216-236 (VLFFVEHNWHAVFVLGAVVLA), 259-279 (WQFVVLPMLTLTYLGQGALVL), 297-317 (ALYPMIVLATAATVIASQALI), 349-369 (IYVPAVNWCLLLAVAVAVVGF), 378-398 (AYGVSVTGTMLITTVLMVIYA), 404-424 (VPAPLLWLFALVFLAVDCAFF), and 428-448 (IIKFLDGAWFPLLLGLILFTL).

Belongs to the HAK/KUP transporter (TC 2.A.72) family.

It is found in the cell inner membrane. The catalysed reaction is K(+)(in) + H(+)(in) = K(+)(out) + H(+)(out). Functionally, transport of potassium into the cell. Likely operates as a K(+):H(+) symporter. This chain is Probable potassium transport system protein Kup, found in Xanthomonas oryzae pv. oryzae (strain KACC10331 / KXO85).